The chain runs to 491 residues: Glutamate--tRNA ligase (491 aa).

A 'HIGH' region motif is present at residues 13-23; sequence PSPTGFLHIGN. Zn(2+)-binding residues include Cys-110, Cys-112, Cys-137, and His-139. Positions 254–258 match the 'KMSKS' region motif; it reads KLSKR. ATP is bound at residue Lys-257.

The protein belongs to the class-I aminoacyl-tRNA synthetase family. Glutamate--tRNA ligase type 1 subfamily. Monomer. It depends on Zn(2+) as a cofactor.

It localises to the cytoplasm. It catalyses the reaction tRNA(Glu) + L-glutamate + ATP = L-glutamyl-tRNA(Glu) + AMP + diphosphate. In terms of biological role, catalyzes the attachment of glutamate to tRNA(Glu) in a two-step reaction: glutamate is first activated by ATP to form Glu-AMP and then transferred to the acceptor end of tRNA(Glu). This chain is Glutamate--tRNA ligase, found in Listeria monocytogenes serovar 1/2a (strain ATCC BAA-679 / EGD-e).